Consider the following 286-residue polypeptide: CDP-diacylglycerol--serine O-phosphatidyltransferase (286 aa).

A run of 5 helical transmembrane segments spans residues 15–35, 95–115, 135–155, 167–187, and 207–227; these read ILPS…IKFA, MLSK…CVVL, EFFV…LLAL, VWFL…GIPM, and LAIC…VIII.

The protein belongs to the CDP-alcohol phosphatidyltransferase class-I family.

Its subcellular location is the cell membrane. It catalyses the reaction a CDP-1,2-diacyl-sn-glycerol + L-serine = a 1,2-diacyl-sn-glycero-3-phospho-L-serine + CMP + H(+). This chain is CDP-diacylglycerol--serine O-phosphatidyltransferase (pssA), found in Mycobacterium bovis (strain ATCC BAA-935 / AF2122/97).